Consider the following 226-residue polypeptide: Ribonuclease 3 (226 aa).

The RNase III domain occupies 6 to 128 (INKLQRKLGY…LIGGVFLDSD (123 aa)). Glu-41 contributes to the Mg(2+) binding site. Residue Asp-45 is part of the active site. Mg(2+) is bound by residues Asp-114 and Glu-117. The active site involves Glu-117. Residues 155 to 225 (DPKTRLQEFL…AEQALIKLGI (71 aa)) enclose the DRBM domain.

Belongs to the ribonuclease III family. In terms of assembly, homodimer. Mg(2+) serves as cofactor.

The protein resides in the cytoplasm. The enzyme catalyses Endonucleolytic cleavage to 5'-phosphomonoester.. Digests double-stranded RNA. Involved in the processing of primary rRNA transcript to yield the immediate precursors to the large and small rRNAs (23S and 16S). Processes some mRNAs, and tRNAs when they are encoded in the rRNA operon. Processes pre-crRNA and tracrRNA of type II CRISPR loci if present in the organism. The chain is Ribonuclease 3 from Erwinia tasmaniensis (strain DSM 17950 / CFBP 7177 / CIP 109463 / NCPPB 4357 / Et1/99).